A 172-amino-acid polypeptide reads, in one-letter code: Small t antigen (172 aa).

M1 bears the N-acetylmethionine; by host mark. Positions 12-75 constitute a J domain; the sequence is ELMDLLGLER…VKVAHQPDFG (64 aa). Residues 101 to 114 form a C4-type; atypical zinc finger; it reads CSKKPSVHCPCMLC. The segment at 120–141 adopts an H1C3-type; atypical zinc-finger fold; sequence HLNRKFLRKEPLVWIDCYCIDC.

In terms of assembly, interacts with host PPP2R1A; the interaction inhibits PP2A activity.

The protein resides in the host cytoplasm. It is found in the host nucleus. Its function is as follows. Promotes efficient viral genome replication by accelerating both G1 and S phase progression of the cell cycle. Inhibits host PP2A by binding to the A subunit, thereby displacing lower affinity regulatory B subunit. Inactivation of PP2A in turn results in the transactivation of cyclin A and cyclin D1 promoters. Late during the infection cycle, ST may induce dephosphorylation of host MTOR, leading to the inhibition of cap-dependent translation. May establish and maintain high levels of viral genomes during persistent infection in cell culture. This chain is Small t antigen, found in BK polyomavirus (strain AS) (BKPyV).